We begin with the raw amino-acid sequence, 224 residues long: UPF0758 protein PFLU_5982 (224 aa).

The MPN domain maps to 102–224 (VLESPKAVRD…PLSMAEYGWL (123 aa)). His173, His175, and Asp186 together coordinate Zn(2+). A JAMM motif motif is present at residues 173 to 186 (HNHPSGSLEPSAAD).

Belongs to the UPF0758 family.

The sequence is that of UPF0758 protein PFLU_5982 from Pseudomonas fluorescens (strain SBW25).